The following is a 419-amino-acid chain: O-methyltransferase gsfB (419 aa).

Residues 255–256 (GG), Asp-278, 300–301 (DF), and Arg-316 each bind S-adenosyl-L-methionine. The active-site Proton acceptor is His-320.

The protein belongs to the class I-like SAM-binding methyltransferase superfamily. Cation-independent O-methyltransferase family.

The catalysed reaction is 2-(2,4-dihydroxy-6-oxidobenzoyl)-5-hydroxy-3-methylbenzenolate + S-adenosyl-L-methionine = griseophenone D + S-adenosyl-L-homocysteine + H(+). It participates in secondary metabolite biosynthesis; terpenoid biosynthesis. Its function is as follows. O-methyltransferase; part of the gene cluster that mediates the biosynthesis of griseofulvin, an important antifungal drug that has been in use for a long time for treating dermatophyte infections. The first step of the pathway is the formation of the heptaketide backbone by gsfA which is initiated by priming with acetyl-CoA, followed by sequential condensations of 6 malonyl-CoA units. The resulting benzophenone can undergo a spontaneous dehydration to form norlichexanthone. However, the true precursor for the griseofulvin biosynthesis is not norlichexanthone, but the heptaketide benzophenone that is O-methylated at 3-OH by gsfB to produce griseophenone D which is further methylated at 9-OH by gsfC to yield griseophenone C. Griseophenone C is then substrate of halogenase gsfI which is responsible for the regio-specific chlorination at the C13 position to form griseophenone B. The cytochrome P450 gsfF catalyzes the coupling of orcinol and phloroglucinol rings in griseophenone B to form desmethyl-dehydrogriseofulvin A which is further methylated at 5-OH by gsfD to yield dehydrogriseofulvin. Finally, gsfE performs stereospecific reduction of enone 18 of dehydrogriseofulvin to afford the final product griseofulvin. The sequence is that of O-methyltransferase gsfB from Penicillium aethiopicum.